The chain runs to 230 residues: LexA repressor (230 aa).

Residues 1-21 (MSDDSSETRTGGRRGADAGLT) form a disordered region. A DNA-binding region (H-T-H motif) is located at residues 44-64 (IREIGDAVGLTSTSSVAHQLR). Catalysis depends on for autocatalytic cleavage activity residues Ser-154 and Lys-191.

Belongs to the peptidase S24 family. In terms of assembly, homodimer.

The enzyme catalyses Hydrolysis of Ala-|-Gly bond in repressor LexA.. Represses a number of genes involved in the response to DNA damage (SOS response), including recA and lexA. In the presence of single-stranded DNA, RecA interacts with LexA causing an autocatalytic cleavage which disrupts the DNA-binding part of LexA, leading to derepression of the SOS regulon and eventually DNA repair. The protein is LexA repressor of Mycobacterium sp. (strain JLS).